Consider the following 80-residue polypeptide: Iota-conotoxin-like r11c (80 aa).

The signal sequence occupies residues 1–19 (MKLCLTFLLVLMILASVTG). Residues 20–35 (EKSSKHTLSRAARVKN) constitute a propeptide that is removed on maturation. 2 positions are modified to 4-hydroxyproline; partial: P38 and P47. Intrachain disulfides connect C41/C55, C48/C58, C54/C63, and C57/C72. The residue at position 65 (P65) is a 4-hydroxyproline. D-leucine is present on L78. A propeptide (removed by a carboxypeptidase) is located at residue R80.

In terms of processing, the natural D-Leu form of the peptide is more potent than the synthetic L-Leu form. As to expression, expressed by the venom duct.

The protein localises to the secreted. Iota-conotoxins bind to voltage-gated sodium channels (Nav) and act as agonists by shifting the voltage-dependence of activation to more hyperpolarized levels. Causes circular motion, convulsions, copious urination, rigid paralysis and death upon intracranial injection into mice. Causes unbalanced swimming, swimming in diagonal and vertical motion and death, when injected intraperitoneally into goldfish. L-Leu and D-Leu forms are active on both nerve and muscle. The polypeptide is Iota-conotoxin-like r11c (Conus radiatus (Rayed cone)).